The primary structure comprises 593 residues: tRNA (guanine(26)-N(2))-dimethyltransferase 1 (593 aa).

The Trm1 methyltransferase domain maps to 9-465 (TVIKEGEAEV…APMEIIWDIM (457 aa)). Arginine 36 contributes to the S-adenosyl-L-methionine binding site. The disordered stretch occupies residues 56–118 (AMLSKRARSS…KTAYESARRE (63 aa)). 2 stretches are compositionally biased toward basic and acidic residues: residues 68–81 (VVEK…KEET) and 88–118 (DNGK…ARRE). S-adenosyl-L-methionine-binding residues include arginine 134, aspartate 152, and valine 185. Cysteine 315, cysteine 318, cysteine 350, and cysteine 353 together coordinate Zn(2+). Positions 546-593 (VNGHLNNNHKEAGDEEEEEEEEEPEEDIIEGEPELKRQKTTEDFASTS) are disordered. Acidic residues predominate over residues 558 to 577 (GDEEEEEEEEEPEEDIIEGE). The segment covering 578–587 (PELKRQKTTE) has biased composition (basic and acidic residues).

Belongs to the class I-like SAM-binding methyltransferase superfamily. Trm1 family.

The catalysed reaction is guanosine(26) in tRNA + 2 S-adenosyl-L-methionine = N(2)-dimethylguanosine(26) in tRNA + 2 S-adenosyl-L-homocysteine + 2 H(+). In terms of biological role, dimethylates a single guanine residue at position 26 of most tRNAs using S-adenosyl-L-methionine as donor of the methyl groups. This is tRNA (guanine(26)-N(2))-dimethyltransferase 1 from Arabidopsis thaliana (Mouse-ear cress).